The following is an 84-amino-acid chain: Small ribosomal subunit protein uS17 (84 aa).

Belongs to the universal ribosomal protein uS17 family. As to quaternary structure, part of the 30S ribosomal subunit.

Its function is as follows. One of the primary rRNA binding proteins, it binds specifically to the 5'-end of 16S ribosomal RNA. This Borrelia garinii subsp. bavariensis (strain ATCC BAA-2496 / DSM 23469 / PBi) (Borreliella bavariensis) protein is Small ribosomal subunit protein uS17.